The chain runs to 349 residues: Isopentenyl-diphosphate delta-isomerase (349 aa).

6 to 7 (RK) serves as a coordination point for substrate. FMN is bound by residues 62–64 (AMT), serine 93, and asparagine 122. Residue glutamine 152 participates in substrate binding. Glutamate 153 serves as a coordination point for Mg(2+). FMN-binding positions include lysine 184, threonine 214, 259-261 (GVR), and 280-281 (AG).

This sequence belongs to the IPP isomerase type 2 family. As to quaternary structure, homooctamer. Dimer of tetramers. FMN serves as cofactor. The cofactor is NADPH. It depends on Mg(2+) as a cofactor.

It is found in the cytoplasm. It carries out the reaction isopentenyl diphosphate = dimethylallyl diphosphate. Involved in the biosynthesis of isoprenoids. Catalyzes the 1,3-allylic rearrangement of the homoallylic substrate isopentenyl (IPP) to its allylic isomer, dimethylallyl diphosphate (DMAPP). In Geobacillus sp. (strain WCH70), this protein is Isopentenyl-diphosphate delta-isomerase.